Here is a 224-residue protein sequence, read N- to C-terminus: Probable amino-acid permease protein YxeN (224 aa).

Helical transmembrane passes span 3 to 23 (TIDW…LPIT), 24 to 44 (LFMA…LALI), 58 to 78 (LYIS…IYYG), 91 to 111 (ALTA…AEIF), 157 to 177 (FIGL…EMFA), and 190 to 210 (FETY…YSIL). An ABC transmembrane type-1 domain is found at 20–211 (LPITLFMAIA…VLTIIYSILQ (192 aa)).

This sequence belongs to the binding-protein-dependent transport system permease family. As to quaternary structure, the complex is composed of two ATP-binding proteins (YxeO), two transmembrane proteins (YxeN) and a solute-binding protein (YxeM).

Its subcellular location is the cell membrane. Functionally, probably part of the ABC transporter complex YxeMNO that could be involved in amino-acid import. May transport S-methylcysteine. Probably responsible for the translocation of the substrate across the membrane. In Bacillus subtilis (strain 168), this protein is Probable amino-acid permease protein YxeN (yxeN).